A 228-amino-acid polypeptide reads, in one-letter code: MTVQIITIDGPSGSGKGTLAAKLAAYYQFHLLDSGALYRLLGLSLHKHDLLEKLDSHLDECVNYARQLNIKFETSAEGTLVFLDGEDVTQTIRTERVGEYASKVAAIPELRQALFERQRAFAQTPGLVADGRDMATSIFPEANAKIYLTASAESRAERRVKQLQGMGLDAKINDILANIQARDKRDMEREVAPLKPAGDAYIIDSSELTIDQVFKLMVDYVNSRTVSN.

10 to 18 contacts ATP; the sequence is GPSGSGKGT.

The protein belongs to the cytidylate kinase family. Type 1 subfamily.

It is found in the cytoplasm. It carries out the reaction CMP + ATP = CDP + ADP. The catalysed reaction is dCMP + ATP = dCDP + ADP. In Acinetobacter baumannii (strain SDF), this protein is Cytidylate kinase.